The sequence spans 378 residues: Zinc transporter 7 (378 aa).

At 1–37 the chain is on the cytoplasmic side; it reads MLPLSIKDDEYKPPRLNLFRKMSGWFRSILADKTSRN. The helical transmembrane segment at 38–58 threads the bilayer; that stretch reads LFFFLCLNLSFAFVELLYGVW. Residues 59 to 67 are Lumenal-facing; that stretch reads SNSLGLISD. A helical transmembrane segment spans residues 68 to 88; it reads SFHMFFDCTALLAGLAASVIS. Topologically, residues 89 to 102 are cytoplasmic; that stretch reads KWRSNDAFSYGYVR. The chain crosses the membrane as a helical span at residues 103-123; sequence AEVLAGFVNGLFLIFTAFFIF. The Lumenal segment spans residues 124–140; it reads SEGVERALEPPDVHHER. A helical membrane pass occupies residues 141–161; sequence LLPVSILGFIVNLIGIFVFQH. A his-rich loop region spans residues 161 to 223; sequence HGGHGHSHGS…HGQDYCHDDH (63 aa). Residues 162 to 238 lie on the Cytoplasmic side of the membrane; the sequence is GGHGHSHGSG…TGSSKQILQG (77 aa). The tract at residues 185 to 214 is disordered; it reads HGHSHRGHGHSHEHKHGHTHDHGHSHGLSH. Over residues 186–211 the composition is skewed to basic residues; sequence GHSHRGHGHSHEHKHGHTHDHGHSHG. A helical transmembrane segment spans residues 239-259; that stretch reads VFLHIVADTLGSIGVIISAIL. Topologically, residues 260–264 are lumenal; that stretch reads MQNYG. A helical transmembrane segment spans residues 265-285; that stretch reads LMIADPICSMLIALLIGVSIV. Residues 286-378 are Cytoplasmic-facing; it reads PLLKESIGIL…LYIQIDVAAM (93 aa).

It belongs to the cation diffusion facilitator (CDF) transporter (TC 2.A.4) family. SLC30A subfamily. As to quaternary structure, homooligomer.

It localises to the golgi apparatus membrane. The protein localises to the cytoplasmic vesicle. It is found in the golgi apparatus. The protein resides in the trans-Golgi network. Its subcellular location is the sarcoplasmic reticulum. It localises to the mitochondrion. The enzyme catalyses Zn(2+)(in) = Zn(2+)(out). Zinc ion transporter mediating zinc entry from the cytosol into the lumen of organelles along the secretory pathway. By contributing to zinc ion homeostasis within the early secretory pathway, regulates the activation and folding of enzymes like alkaline phosphatases. The chain is Zinc transporter 7 (SLC30A7) from Gallus gallus (Chicken).